Here is a 272-residue protein sequence, read N- to C-terminus: Ethanolamine ammonia-lyase small subunit (272 aa).

Positions 161, 182, and 211 each coordinate adenosylcob(III)alamin.

It belongs to the EutC family. As to quaternary structure, the basic unit is a heterodimer which dimerizes to form tetramers. The heterotetramers trimerize; 6 large subunits form a core ring with 6 small subunits projecting outwards. Adenosylcob(III)alamin serves as cofactor.

It is found in the bacterial microcompartment. It catalyses the reaction ethanolamine = acetaldehyde + NH4(+). Its pathway is amine and polyamine degradation; ethanolamine degradation. Functionally, catalyzes the deamination of various vicinal amino-alcohols to oxo compounds. Allows this organism to utilize ethanolamine as the sole source of nitrogen and carbon in the presence of external vitamin B12. This chain is Ethanolamine ammonia-lyase small subunit, found in Pseudomonas putida (strain GB-1).